The sequence spans 195 residues: Kiwa protein KwaA (195 aa).

The next 3 helical transmembrane spans lie at 10-30 (GLYI…TAKI), 46-66 (LVLT…SIYF), and 117-137 (IAYL…DKYY).

Its subcellular location is the cell inner membrane. Its function is as follows. Component of antiviral defense system Kiwa, composed of KwaA and KwaB. Expression of Kiwa in E.coli (strain MG1655) confers resistance to phages lambda and SECphi18. The protein is Kiwa protein KwaA of Escherichia coli O55:H7 (strain RM12579 / EPEC).